An 852-amino-acid chain; its full sequence is Carbohydrate-responsive element-binding protein (852 aa).

Positions 1-12 are enriched in low complexity; it reads MAGALAGLAAGL. Disordered regions lie at residues 1–36 and 54–80; these read MAGA…SLRR and VSSP…FGPR. 3 positions are modified to phosphoserine: Ser-20, Ser-23, and Ser-25. Thr-27 carries the post-translational modification Phosphothreonine. Phosphoserine is present on Ser-29. A Phosphoserine modification is found at Ser-196. Disordered stretches follow at residues 328 to 365, 486 to 527, and 548 to 648; these read DSLF…CPGP, PCFS…NNPC, and STLL…NKTE. Residues 505–521 show a composition bias toward low complexity; it reads ASPPTLAPATASPPTTA. The segment covering 548–559 has biased composition (polar residues); the sequence is STLLRSPGSPQE. Ser-556 carries the post-translational modification Phosphoserine; by AMPK. Residues 568 to 584 show a composition bias toward pro residues; that stretch reads FLPPTPAPTPPRPPPGP. Phosphoserine occurs at positions 602, 614, and 631. The region spanning 649-703 is the bHLH domain; it reads NRRITHISAEQKRRFNIKLGFDTLHGLVSTLSAQPSLKVSKATTLQKTAEYILML. Residues 703–724 form a leucine-zipper region; that stretch reads LQQERAGLQEEAQQLRDEIEEL.

Binds DNA as a heterodimer with MLX/TCFL4. Post-translationally, phosphorylation at Ser-556 by AMPK inactivates the DNA-binding activity. As to expression, expressed in liver, heart, kidney, cerebellum and intestinal tissues.

It is found in the nucleus. Functionally, binds DNA as a heterodimer with MLX/TCFL4 and activates transcription. Binds to the canonical E box sequence 5'-CACGTG-3'. Plays a role in transcriptional activation of glycolytic target genes. Involved in glucose-responsive gene regulation. Regulates transcription in response to changes in cellular carbohydrate abundance such as occurs during fasting to feeding metabolic transition. Refeeding stimulates MLXIPL/ChREBP transcription factor, leading to increased BCKDK to PPM1K expression ratio, phosphorylation and activation of ACLY that ultimately results in the generation of malonyl-CoA and oxaloacetate immediate substrates of de novo lipogenesis and gluconeogenesis, respectively. The protein is Carbohydrate-responsive element-binding protein (MLXIPL) of Homo sapiens (Human).